Reading from the N-terminus, the 977-residue chain is Disks large-associated protein 1 (977 aa).

Disordered regions lie at residues threonine 150–serine 203 and lysine 349–alanine 371. 14 positions are modified to phosphoserine: serine 169, serine 356, serine 359, serine 362, serine 366, serine 383, serine 412, serine 415, serine 419, serine 422, serine 431, serine 503, serine 510, and serine 562. A Phosphothreonine modification is found at threonine 563. Phosphoserine is present on residues serine 565 and serine 589. Threonine 590 carries the phosphothreonine modification. 2 positions are modified to phosphoserine: serine 592 and serine 595. Interaction with DYL2 stretches follow at residues leucine 650–glutamate 661 and serine 672–glutamate 683. A disordered region spans residues tryptophan 899–serine 965. Composition is skewed to basic and acidic residues over residues aspartate 903 to alanine 912 and isoleucine 928 to lysine 943. The residue at position 932 (serine 932) is a Phosphoserine. The segment covering valine 954 to alanine 963 has biased composition (polar residues). The PDZ-binding motif lies at threonine 975–leucine 977.

This sequence belongs to the SAPAP family. Interacts with guanylate kinase-like domain of DLG1, DLG2, DLG3, DLG4 and AIP1. Interacts with the PDZ domain of SHANK1, SHANK2 and SHANK3. Found in a complex with DLG4 and SHANK1, SHANK2 or SHANK3. Found in a complex with DLG4 and BEGAIN. Interacts with DYL2 and LRFN1. Interacts with MPP2 (via the SH3-Guanylate kinase-like sub-module). In terms of processing, ubiquitinated by TRIM3; leading to proteasomal degradation. Expressed in brain.

The protein localises to the cell membrane. It localises to the postsynaptic density. Its subcellular location is the synapse. Part of the postsynaptic scaffold in neuronal cells. This Homo sapiens (Human) protein is Disks large-associated protein 1 (DLGAP1).